A 320-amino-acid polypeptide reads, in one-letter code: Cytosolic Fe-S cluster assembly factor NUBP1 (320 aa).

N-acetylmethionine is present on M1. The [4Fe-4S] cluster site is built by C8, C22, C25, and C31. Residue G62 to S69 participates in ATP binding. [4Fe-4S] cluster is bound by residues C235 and C238. Residue S319 is modified to Phosphoserine.

The protein belongs to the Mrp/NBP35 ATP-binding proteins family. NUBP1/NBP35 subfamily. In terms of assembly, heterotetramer of 2 NUBP1 and 2 NUBP2 chains. Interacts with KIFC1. Interacts with NUBP2. Interacts with the BBS/CCT complex subunit CCT1. Requires [4Fe-4S] cluster as cofactor.

The protein localises to the cytoplasm. Its subcellular location is the nucleus. The protein resides in the cell projection. It localises to the cytoskeleton. It is found in the cilium axoneme. The protein localises to the cilium basal body. Its subcellular location is the microtubule organizing center. The protein resides in the centrosome. It localises to the centriole. Its function is as follows. Component of the cytosolic iron-sulfur (Fe/S) protein assembly (CIA) machinery. Required for maturation of extramitochondrial Fe-S proteins. The NUBP1-NUBP2 heterotetramer forms a Fe-S scaffold complex, mediating the de novo assembly of an Fe-S cluster and its transfer to target apoproteins. Implicated in the regulation of centrosome duplication. Negatively regulates cilium formation and structure. This chain is Cytosolic Fe-S cluster assembly factor NUBP1, found in Homo sapiens (Human).